The following is a 240-amino-acid chain: Probable transcriptional regulatory protein HPAG1_0159 (240 aa).

The protein belongs to the TACO1 family.

Its subcellular location is the cytoplasm. This chain is Probable transcriptional regulatory protein HPAG1_0159, found in Helicobacter pylori (strain HPAG1).